We begin with the raw amino-acid sequence, 2531 residues long: Talin (2531 aa).

The FERM domain occupies 87 to 401 (RPLRVRMMDE…GYIDIILKKK (315 aa)). Residues 598 to 621 (GEKLLEAARGLAGAVRHLLKSAEP) are interaction with VIN1. One can recognise an I/LWEQ domain in the interval 2287 to 2526 (TDWVDPSDPN…KIRHDKYKRH (240 aa)). Positions 2466-2485 (AAKRSSEEGDDEEVSGGGQE) are disordered.

In terms of assembly, interacts with VIN1 (vinculin); the interaction facilitates VIN1 binding to F-actin.

Its subcellular location is the cytoplasm. It is found in the cytoskeleton. The protein resides in the cell cortex. Functionally, probably involved in connections of major cytoskeletal structures to the plasma membrane. The chain is Talin from Oscarella pearsei (Sponge).